We begin with the raw amino-acid sequence, 143 residues long: Transcriptional regulator MraZ (143 aa).

2 SpoVT-AbrB domains span residues Thr-5 to Ala-47 and Thr-76 to Ala-119.

The protein belongs to the MraZ family. As to quaternary structure, forms oligomers.

The protein resides in the cytoplasm. It is found in the nucleoid. The sequence is that of Transcriptional regulator MraZ from Mycobacterium bovis (strain ATCC BAA-935 / AF2122/97).